Consider the following 275-residue polypeptide: Trypsin-4 (275 aa).

Residues 1 to 18 (MSNKITILLAVLLAVVAC) form the signal peptide. A propeptide spans 19–48 (AQAHASHQRRVPYPLPRFLPRPHHTVSNHR) (activation peptide). The Peptidase S1 domain maps to 49–274 (IVGGFEIDVA…VRDWIRETCG (226 aa)). C74 and C90 are oxidised to a cystine. Residues H89 and D134 each act as charge relay system in the active site. Intrachain disulfides connect C199-C215 and C226-C250. S230 serves as the catalytic Charge relay system.

The protein belongs to the peptidase S1 family. Expressed in the midgut. Expression levels drop a few hours after blood feeding and pick up again 28 hours later.

The protein localises to the secreted. It catalyses the reaction Preferential cleavage: Arg-|-Xaa, Lys-|-Xaa.. Functionally, constitutive trypsin that is expressed 2 days after emergence, coinciding with host seeking behavior of the female. The polypeptide is Trypsin-4 (TRYP4) (Anopheles gambiae (African malaria mosquito)).